The chain runs to 174 residues: Co-chaperone protein HscB homolog (174 aa).

One can recognise a J domain in the interval 2 to 74 (NYFELFKFSP…IRRAEHMLSL (73 aa)).

This sequence belongs to the HscB family. In terms of assembly, interacts with HscA and stimulates its ATPase activity.

In terms of biological role, co-chaperone involved in the maturation of iron-sulfur cluster-containing proteins. Seems to help targeting proteins to be folded toward HscA. In Shewanella baltica (strain OS185), this protein is Co-chaperone protein HscB homolog.